Consider the following 508-residue polypeptide: uncharacterized protein (508 aa).

It localises to the virion. This is an uncharacterized protein from Acanthamoeba polyphaga mimivirus (APMV).